Consider the following 403-residue polypeptide: tRNA pseudouridine synthase 4 (403 aa).

D75 functions as the Nucleophile in the catalytic mechanism.

The protein belongs to the pseudouridine synthase TruB family.

Its subcellular location is the nucleus. It localises to the mitochondrion. It catalyses the reaction uridine(55) in tRNA = pseudouridine(55) in tRNA. It carries out the reaction a uridine in mRNA = a pseudouridine in mRNA. Responsible for synthesis of pseudouridine from uracil-55 in the psi GC loop of transfer RNAs. Also catalyzes pseudouridylation of mRNAs with the consensus sequence 5'-GGUUCRA-3'. This is tRNA pseudouridine synthase 4 (PUS4) from Saccharomyces cerevisiae (strain ATCC 204508 / S288c) (Baker's yeast).